The sequence spans 56 residues: Large ribosomal subunit protein bL32 (56 aa).

Residues 1 to 20 (MAVPKRRTSRSNTRSRRAQW) show a composition bias toward basic residues. A disordered region spans residues 1 to 26 (MAVPKRRTSRSNTRSRRAQWKAKAPA).

The protein belongs to the bacterial ribosomal protein bL32 family.

The chain is Large ribosomal subunit protein bL32 from Parafrankia sp. (strain EAN1pec).